Reading from the N-terminus, the 795-residue chain is Phenylalanine--tRNA ligase beta subunit (795 aa).

The tRNA-binding domain maps to 39 to 148; that stretch reads AGTFNGVKVG…IDAPIGMDFR (110 aa). The B5 domain maps to 401–476; the sequence is PKPNKVALRR…RIYGYDNIPN (76 aa). Asp-454, Asp-460, Glu-463, and Glu-464 together coordinate Mg(2+). The region spanning 701–794 is the FDX-ACB domain; sequence SKFPANRRDI…VSEKFGASLR (94 aa).

The protein belongs to the phenylalanyl-tRNA synthetase beta subunit family. Type 1 subfamily. In terms of assembly, tetramer of two alpha and two beta subunits. Mg(2+) is required as a cofactor.

Its subcellular location is the cytoplasm. The enzyme catalyses tRNA(Phe) + L-phenylalanine + ATP = L-phenylalanyl-tRNA(Phe) + AMP + diphosphate + H(+). The chain is Phenylalanine--tRNA ligase beta subunit from Vibrio vulnificus (strain CMCP6).